Consider the following 204-residue polypeptide: NAD(P)H dehydrogenase (quinone) (204 aa).

Residues V3–V194 enclose the Flavodoxin-like domain. FMN-binding positions include S9–I14 and T82–F84. Position 11 (Y11) interacts with NAD(+). A substrate-binding site is contributed by W102. H138 is an FMN binding site.

It belongs to the WrbA family. Requires FMN as cofactor.

It carries out the reaction a quinone + NADH + H(+) = a quinol + NAD(+). It catalyses the reaction a quinone + NADPH + H(+) = a quinol + NADP(+). The sequence is that of NAD(P)H dehydrogenase (quinone) from Syntrophobacter fumaroxidans (strain DSM 10017 / MPOB).